The primary structure comprises 520 residues: N-acetylgalactosamine-6-sulfatase (520 aa).

Residues 1 to 23 (MAACTAAQQLLLVLSALGLLAAG) form the signal peptide. Positions 24–377 (APQPPNIVLL…PTMLKGQMMD (354 aa)) are catalytic domain. Residues D36, D37, and C76 each coordinate Ca(2+). The active-site Nucleophile is the C76. 3-oxoalanine (Cys) is present on C76. H139 is a catalytic residue. N201 carries an N-linked (GlcNAc...) asparagine glycan. Ca(2+) contacts are provided by D286 and N287. A disulfide bond links C306 and C417. An N-linked (GlcNAc...) asparagine glycan is attached at N421. Intrachain disulfides connect C487-C516 and C499-C505.

The protein belongs to the sulfatase family. As to quaternary structure, homodimer. The cofactor is Ca(2+). In terms of processing, the conversion to 3-oxoalanine (also known as C-formylglycine, FGly), of a serine or cysteine residue in prokaryotes and of a cysteine residue in eukaryotes, is critical for catalytic activity. Widely expressed. Higher expression in liver and kidney.

It localises to the lysosome. The enzyme catalyses Hydrolysis of the 6-sulfate groups of the N-acetyl-D-galactosamine 6-sulfate units of chondroitin sulfate and of the D-galactose 6-sulfate units of keratan sulfate.. The protein is N-acetylgalactosamine-6-sulfatase (Galns) of Mus musculus (Mouse).